A 348-amino-acid chain; its full sequence is S-adenosylmethionine:tRNA ribosyltransferase-isomerase (348 aa).

It belongs to the QueA family. Monomer.

Its subcellular location is the cytoplasm. It carries out the reaction 7-aminomethyl-7-carbaguanosine(34) in tRNA + S-adenosyl-L-methionine = epoxyqueuosine(34) in tRNA + adenine + L-methionine + 2 H(+). It functions in the pathway tRNA modification; tRNA-queuosine biosynthesis. Transfers and isomerizes the ribose moiety from AdoMet to the 7-aminomethyl group of 7-deazaguanine (preQ1-tRNA) to give epoxyqueuosine (oQ-tRNA). The sequence is that of S-adenosylmethionine:tRNA ribosyltransferase-isomerase from Tolumonas auensis (strain DSM 9187 / NBRC 110442 / TA 4).